The primary structure comprises 290 residues: Enoyl-CoA hydratase, mitochondrial (290 aa).

The transit peptide at 1 to 27 (MAALRALLPRVRAPLRPWLFCPVQRSF) directs the protein to the mitochondrion. Substrate contacts are provided by residues 98–101 (ADIK) and Gly141. Lys101 is modified (N6-acetyllysine; alternate). The residue at position 101 (Lys101) is an N6-succinyllysine; alternate. Position 204 is an N6-succinyllysine (Lys204). Lys211 bears the N6-acetyllysine mark.

This sequence belongs to the enoyl-CoA hydratase/isomerase family. Homohexamer; dimer of trimers.

It is found in the mitochondrion matrix. It carries out the reaction a (3S)-3-hydroxyacyl-CoA = a (2E)-enoyl-CoA + H2O. The catalysed reaction is a (3E)-enoyl-CoA = a 4-saturated (2E)-enoyl-CoA. It catalyses the reaction (3E)-hexenoyl-CoA = (2E)-hexenoyl-CoA. The enzyme catalyses (3S)-3-hydroxybutanoyl-CoA = (2E)-butenoyl-CoA + H2O. It carries out the reaction 3-hydroxyisovaleryl-CoA = 3-methylbut-2-enoyl-CoA + H2O. The catalysed reaction is 3-hydroxypropanoyl-CoA = acryloyl-CoA + H2O. It catalyses the reaction 3-hydroxybutanoyl-CoA = (2E)-butenoyl-CoA + H2O. The enzyme catalyses 2-methylpropenoyl-CoA + H2O = (S)-3-hydroxyisobutanoyl-CoA. It carries out the reaction (3S)-hydroxyhexanoyl-CoA = (2E)-hexenoyl-CoA + H2O. The catalysed reaction is (3S)-hydroxydecanoyl-CoA = (2E)-decenoyl-CoA + H2O. It participates in lipid metabolism; fatty acid beta-oxidation. Converts unsaturated trans-2-enoyl-CoA species ((2E)-enoyl-CoA) to the corresponding 3(S)-3-hydroxyacyl-CoA species through addition of a water molecule to the double bond. Catalyzes the hydration of medium- and short-chained fatty enoyl-CoA thioesters from 4 carbons long (C4) up to C16. Has high substrate specificity for crotonyl-CoA ((2E)-butenoyl-CoA) and moderate specificity for acryloyl-CoA, 3-methylcrotonyl-CoA (3-methyl-(2E)-butenoyl-CoA) and methacrylyl-CoA ((2E)-2-methylpropenoyl-CoA). Can bind tiglyl-CoA (2-methylcrotonoyl-CoA), but hydrates only a small amount of this substrate. Plays a key role in the beta-oxidation spiral of short- and medium-chain fatty acid oxidation. At a lower rate than the hydratase reaction, catalyzes the isomerase reaction of trans-3-enoyl-CoA species (such as (3E)-hexenoyl-CoA) to trans-2-enoyl-CoA species (such as (2E)-hexenoyl-CoA), which are subsequently hydrated to 3(S)-3-hydroxyacyl-CoA species (such as (3S)-hydroxyhexanoyl-CoA). The chain is Enoyl-CoA hydratase, mitochondrial (ECHS1) from Bos taurus (Bovine).